Reading from the N-terminus, the 325-residue chain is Replication factor C small subunit (325 aa).

47–54 provides a ligand contact to ATP; sequence GPPGTGKT.

The protein belongs to the activator 1 small subunits family. RfcS subfamily. In terms of assembly, heteromultimer composed of small subunits (RfcS) and large subunits (RfcL).

Part of the RFC clamp loader complex which loads the PCNA sliding clamp onto DNA. This Aeropyrum pernix (strain ATCC 700893 / DSM 11879 / JCM 9820 / NBRC 100138 / K1) protein is Replication factor C small subunit.